Consider the following 399-residue polypeptide: F-box/kelch-repeat protein At5g48980 (399 aa).

The segment covering 1 to 11 has biased composition (polar residues); it reads MADSQRLSTAS. Residues 1–29 are disordered; sequence MADSQRLSTASGVKDGQPPWKKKKLSNDT. An F-box domain is found at 29-75; that stretch reads TTSNPSLPYDVILIILARVSRSYYTNLSLVSKSFRSILTSPELYKTR. A Kelch repeat occupies 199–248; sequence IVYLPGSFESPDSLNCVEVYNTMTQTWKPVPPEKRMFKLENLEKKIYYKS.

The chain is F-box/kelch-repeat protein At5g48980 from Arabidopsis thaliana (Mouse-ear cress).